A 116-amino-acid polypeptide reads, in one-letter code: Thioredoxin H-type (116 aa).

The Thioredoxin domain maps to 2–115; that stretch reads AEEAQVIACH…HKIAVHAPIT (114 aa). Residues Cys39 and Cys42 each act as nucleophile in the active site. A disulfide bridge connects residues Cys39 and Cys42.

Belongs to the thioredoxin family. Plant H-type subfamily.

Its subcellular location is the cytoplasm. Its function is as follows. Participates in various redox reactions through the reversible oxidation of the active center dithiol to a disulfide. The H form is known to activate a number of cytosolic enzymes. This Fagopyrum esculentum (Common buckwheat) protein is Thioredoxin H-type.